Consider the following 462-residue polypeptide: Glycoprotein endo-alpha-1,2-mannosidase (462 aa).

The Cytoplasmic portion of the chain corresponds to 1–8; it reads MAKFRRRT. The helical; Signal-anchor for type II membrane protein transmembrane segment at 9 to 29 threads the bilayer; it reads CIILALFILFIFSLMMGLKML. Over 30–462 the chain is Lumenal; the sequence is RPNTATFGAP…YALDRQLPVS (433 aa). The interval 60-462 is catalytic; sequence DFQKSDRINS…YALDRQLPVS (403 aa).

This sequence belongs to the glycosyl hydrolase 99 family. In terms of processing, undergoes proteolytic cleavage in the C-terminal region. Highly expressed in the liver and kidney. Expressed at lower levels in muscle, pancreas, heart, placenta, lung and brain.

It is found in the golgi apparatus membrane. The enzyme catalyses N-{alpha-Glc-(1-&gt;3)-alpha-Man-(1-&gt;2)-alpha-Man-(1-&gt;2)-alpha-Man-(1-&gt;3)-[alpha-Man-(1-&gt;2)-alpha-Man-(1-&gt;3)-[alpha-Man-(1-&gt;2)-alpha-Man-(1-&gt;6)]-alpha-Man-(1-&gt;6)]-beta-Man-(1-&gt;4)-beta-GlcNAc-(1-&gt;4)-beta-GlcNAc}-L-asparaginyl-[protein] + H2O = alpha-D-glucosyl-(1-&gt;3)-D-mannopyranose + N(4)-{alpha-D-Man-(1-&gt;2)-alpha-D-Man-(1-&gt;3)-[alpha-D-Man-(1-&gt;2)-alpha-D-Man-(1-&gt;3)-[alpha-D-Man-(1-&gt;2)-alpha-D-Man-(1-&gt;6)]-alpha-D-Man-(1-&gt;6)]-beta-D-Man-(1-&gt;4)-beta-D-GlaNAc-(1-&gt;4)-beta-D-GlcNAc}-L-asparaginyl-[protein] (N-glucan mannose isomer 8A1,2,3B1,2). The sequence is that of Glycoprotein endo-alpha-1,2-mannosidase (MANEA) from Homo sapiens (Human).